The sequence spans 108 residues: uncharacterized protein (108 aa).

Positions 75 to 94 (TPQVSSFPSSTTSLSHSCTT) are disordered. Residues 79-94 (SSFPSSTTSLSHSCTT) are compositionally biased toward low complexity.

This is an uncharacterized protein from Homo sapiens (Human).